Reading from the N-terminus, the 693-residue chain is F-box protein MAX2 (693 aa).

In terms of domain architecture, F-box spans 3–50; the sequence is STTLSDLPDVILSTISSLVSDSRARNSLSLVSHKFLALERSTRSHLTI. LRR repeat units follow at residues 9–34, 49–74, 75–100, 110–135, 141–167, 168–196, 200–225, 232–257, 274–299, 302–327, 332–356, 357–382, 383–409, and 410–436; these read LPDV…SLVS, TIRG…DLSF, LSPW…RLKF, VYTR…KLLR, SQIP…DLSN, FYHW…DLLT, TEGY…RVAC, FEFV…HMVD, DSAV…VLDV, DVKH…KLGQ, CSAT…SIKN, SGDL…EIQG, CENV…RISC, and CKNL…HIDC. Positions 445–465 are disordered; that stretch reads EVEGRVETSEADHEEEDDGYE. LRR repeat units follow at residues 480–505, 508–532, 541–565, and 608–637; these read CSTS…SLWI, GEFL…RIKI, RPAE…QLDC, and DRDV…FIHG.

Part of a SCF (SKP1-cullin-F-box) protein ligase complex. Interacts with SKP1A/ASK1. Interacts with CUL1. Interacts with SMXL6, SMXL7 and SMXL8. Interacts with D14. Forms a complex with D14 and SKP1A/ASK1 in presence of strigolactone. As to expression, expressed in the vasculature of growing leaves and roots, rosette axillary bud, flowers, siliques, funiculi and stems.

It localises to the nucleus. It functions in the pathway protein modification; protein ubiquitination. Its function is as follows. Component of SCF(ASK-cullin-F-box) E3 ubiquitin ligase complexes, which may mediate the ubiquitination and subsequent proteasomal degradation of target proteins. Promotes the senescence. Is necessary for responses to strigolactones and karrikins. Contributes to the selective repression of axillary shoots and moderates the branching by regulating negatively the auxin transport in primary stems, in an AXR1-independent manner. Required for the progression of leaf senescence mediated by methyl jasmonate. Required at each node to suppress axillary bud growth. This is F-box protein MAX2 from Arabidopsis thaliana (Mouse-ear cress).